The sequence spans 330 residues: Phosphate acyltransferase (330 aa).

Belongs to the PlsX family. In terms of assembly, homodimer. Probably interacts with PlsY.

The protein resides in the cytoplasm. The catalysed reaction is a fatty acyl-[ACP] + phosphate = an acyl phosphate + holo-[ACP]. It functions in the pathway lipid metabolism; phospholipid metabolism. In terms of biological role, catalyzes the reversible formation of acyl-phosphate (acyl-PO(4)) from acyl-[acyl-carrier-protein] (acyl-ACP). This enzyme utilizes acyl-ACP as fatty acyl donor, but not acyl-CoA. This is Phosphate acyltransferase from Streptococcus pneumoniae (strain ATCC 700669 / Spain 23F-1).